The primary structure comprises 331 residues: 3-dehydroquinate synthase homolog (331 aa).

It belongs to the archaeal-type DHQ synthase family.

The chain is 3-dehydroquinate synthase homolog from Aquifex aeolicus (strain VF5).